Here is a 311-residue protein sequence, read N- to C-terminus: Ribosomal RNA small subunit methyltransferase H (311 aa).

S-adenosyl-L-methionine-binding positions include 33–35 (AGH), aspartate 53, phenylalanine 80, aspartate 101, and glutamine 108.

It belongs to the methyltransferase superfamily. RsmH family.

Its subcellular location is the cytoplasm. The catalysed reaction is cytidine(1402) in 16S rRNA + S-adenosyl-L-methionine = N(4)-methylcytidine(1402) in 16S rRNA + S-adenosyl-L-homocysteine + H(+). Functionally, specifically methylates the N4 position of cytidine in position 1402 (C1402) of 16S rRNA. This Clostridioides difficile (strain 630) (Peptoclostridium difficile) protein is Ribosomal RNA small subunit methyltransferase H.